A 298-amino-acid polypeptide reads, in one-letter code: Glycine--tRNA ligase alpha subunit (298 aa).

The protein belongs to the class-II aminoacyl-tRNA synthetase family. In terms of assembly, tetramer of two alpha and two beta subunits.

Its subcellular location is the cytoplasm. The catalysed reaction is tRNA(Gly) + glycine + ATP = glycyl-tRNA(Gly) + AMP + diphosphate. The protein is Glycine--tRNA ligase alpha subunit of Helicobacter hepaticus (strain ATCC 51449 / 3B1).